The primary structure comprises 296 residues: Protoheme IX farnesyltransferase (296 aa).

Over 1 to 9 the chain is Cytoplasmic; sequence MMFKQYLQV. Residues 10–28 traverse the membrane as a helical segment; that stretch reads TKPGIIFGNLISVIGGFLL. Residues 29–37 are Periplasmic-facing; sequence ASKGSIDYP. Residues 38-56 form a helical membrane-spanning segment; the sequence is LFIYTLVGVSLVVASGCVF. Over 57–78 the chain is Cytoplasmic; it reads NNFIDRDIDRKMERTKNRVLVK. A helical membrane pass occupies residues 79-97; sequence GLISPGVSLVYATLLGIAG. Topologically, residues 98-107 are periplasmic; the sequence is FMLLWFGANP. A helical transmembrane segment spans residues 108–126; sequence LACWLGVMGFVVYVGIYSL. The Cytoplasmic portion of the chain corresponds to 127 to 197; that stretch reads YMKRHSVYGT…YQAANIPVLP (71 aa). Residues 198–216 traverse the membrane as a helical segment; the sequence is VVKGISVAKNHITLYIIAF. Residues 217–228 are Periplasmic-facing; sequence AVATLMLTLGGY. The chain crosses the membrane as a helical span at residues 229–247; sequence AGYKYLVVAAAVSVWWLGM. Over 248–268 the chain is Cytoplasmic; that stretch reads ALRGYKVEDDKVWARKLFGFS. The helical transmembrane segment at 269 to 287 threads the bilayer; it reads IIAITALSIMMSVDFMVPN. The Periplasmic portion of the chain corresponds to 288–296; it reads SQSLLTYVW.

The protein belongs to the UbiA prenyltransferase family. Protoheme IX farnesyltransferase subfamily.

Its subcellular location is the cell inner membrane. The catalysed reaction is heme b + (2E,6E)-farnesyl diphosphate + H2O = Fe(II)-heme o + diphosphate. It functions in the pathway porphyrin-containing compound metabolism; heme O biosynthesis; heme O from protoheme: step 1/1. In terms of biological role, converts heme B (protoheme IX) to heme O by substitution of the vinyl group on carbon 2 of heme B porphyrin ring with a hydroxyethyl farnesyl side group. The chain is Protoheme IX farnesyltransferase from Salmonella arizonae (strain ATCC BAA-731 / CDC346-86 / RSK2980).